We begin with the raw amino-acid sequence, 275 residues long: Nitrogenase iron protein 3 (275 aa).

9-16 serves as a coordination point for ATP; the sequence is GKGGIGKS. C97 is a [4Fe-4S] cluster binding site. R100 carries the ADP-ribosylarginine; by dinitrogenase reductase ADP-ribosyltransferase modification. A [4Fe-4S] cluster-binding site is contributed by C132.

Belongs to the NifH/BchL/ChlL family. Homodimer. The cofactor is [4Fe-4S] cluster. Post-translationally, the reversible ADP-ribosylation of Arg-100 inactivates the nitrogenase reductase and regulates nitrogenase activity.

It catalyses the reaction N2 + 8 reduced [2Fe-2S]-[ferredoxin] + 16 ATP + 16 H2O = H2 + 8 oxidized [2Fe-2S]-[ferredoxin] + 2 NH4(+) + 16 ADP + 16 phosphate + 6 H(+). Functionally, the key enzymatic reactions in nitrogen fixation are catalyzed by the nitrogenase complex, which has 2 components: the iron protein (component 2) and a component 1 which is either a molybdenum-iron protein, a vanadium-iron, or an iron-iron protein. The polypeptide is Nitrogenase iron protein 3 (anfH) (Azotobacter vinelandii).